The chain runs to 260 residues: Probable 6-oxopurine nucleoside phosphorylase (260 aa).

Phosphate contacts are provided by residues S9 and 49–50; that span reads RH. M182 contacts substrate. T183 contributes to the phosphate binding site. 206–208 lines the substrate pocket; the sequence is NMA.

The protein belongs to the PNP/MTAP phosphorylase family. MTAP subfamily. As to quaternary structure, homohexamer. Dimer of a homotrimer.

It catalyses the reaction a purine D-ribonucleoside + phosphate = a purine nucleobase + alpha-D-ribose 1-phosphate. It participates in purine metabolism; purine nucleoside salvage. In terms of biological role, purine nucleoside phosphorylase which is highly specific for 6-oxopurine nucleosides. Cleaves guanosine or inosine to respective bases and sugar-1-phosphate molecules. Involved in purine salvage. The chain is Probable 6-oxopurine nucleoside phosphorylase from Moorella thermoacetica (strain ATCC 39073 / JCM 9320).